The sequence spans 90 residues: MKNYKIIVFGTVQGVGFRYTTKAIADNMGIKGIVRNQSDGTVYIEAQGNSLLLSQFISSIKAPKNPFAKVTKIDVSEIPVKTYNDFSVTY.

One can recognise an Acylphosphatase-like domain in the interval 3–90; that stretch reads NYKIIVFGTV…KTYNDFSVTY (88 aa). Residues Arg-18 and Asn-36 contribute to the active site.

This sequence belongs to the acylphosphatase family.

The catalysed reaction is an acyl phosphate + H2O = a carboxylate + phosphate + H(+). The sequence is that of Acylphosphatase (acyP) from Ligilactobacillus salivarius (strain UCC118) (Lactobacillus salivarius).